The sequence spans 355 residues: Protein RecA (355 aa).

Residue 66-73 (GPESSGKT) participates in ATP binding. A disordered region spans residues 331 to 355 (DVPEEDLPTTEDEQINILPDDSTEE). Residues 332–344 (VPEEDLPTTEDEQ) show a composition bias toward acidic residues.

This sequence belongs to the RecA family.

It localises to the cytoplasm. Can catalyze the hydrolysis of ATP in the presence of single-stranded DNA, the ATP-dependent uptake of single-stranded DNA by duplex DNA, and the ATP-dependent hybridization of homologous single-stranded DNAs. It interacts with LexA causing its activation and leading to its autocatalytic cleavage. In Latilactobacillus sakei subsp. sakei (strain 23K) (Lactobacillus sakei subsp. sakei), this protein is Protein RecA.